Here is a 261-residue protein sequence, read N- to C-terminus: Cytochrome c oxidase subunit 3 (261 aa).

The Mitochondrial matrix segment spans residues 1 to 15 (MTHQTHAYHMVNPSP). A helical transmembrane segment spans residues 16-34 (WPLTGALSALLMTSGLIMW). Residues 35–40 (FHFNST) lie on the Mitochondrial intermembrane side of the membrane. A helical membrane pass occupies residues 41–66 (TLLMLGLTTNMLTMYQWWRDVIREST). Residues 67-72 (FQGHHT) lie on the Mitochondrial matrix side of the membrane. A helical membrane pass occupies residues 73–105 (PNVQKGLRYGMILFIISEVLFFTGFFWAFYHSS). Residues 106 to 128 (LAPTPELGGCWPPTGINPLNPLE) are Mitochondrial intermembrane-facing. A helical membrane pass occupies residues 129–152 (VPLLNTSVLLASGVSITWAHHSLM). The Mitochondrial matrix segment spans residues 153 to 155 (EGN). The helical transmembrane segment at 156-183 (RNHMLQALFITIALGVYFTLLQASEYYE) threads the bilayer. Residues 184 to 190 (APFTISD) are Mitochondrial intermembrane-facing. A helical membrane pass occupies residues 191-223 (GVYGSTFFVATGFHGLHVIIGSTFLIVCFFRQL). Over 224–232 (KFHFTSNHH) the chain is Mitochondrial matrix. Residues 233-256 (FGFEAAAWYWHFVDVVWLFLYVSI) form a helical membrane-spanning segment. The Mitochondrial intermembrane segment spans residues 257-261 (YWWGS).

Belongs to the cytochrome c oxidase subunit 3 family. As to quaternary structure, component of the cytochrome c oxidase (complex IV, CIV), a multisubunit enzyme composed of 14 subunits. The complex is composed of a catalytic core of 3 subunits MT-CO1, MT-CO2 and MT-CO3, encoded in the mitochondrial DNA, and 11 supernumerary subunits COX4I, COX5A, COX5B, COX6A, COX6B, COX6C, COX7A, COX7B, COX7C, COX8 and NDUFA4, which are encoded in the nuclear genome. The complex exists as a monomer or a dimer and forms supercomplexes (SCs) in the inner mitochondrial membrane with NADH-ubiquinone oxidoreductase (complex I, CI) and ubiquinol-cytochrome c oxidoreductase (cytochrome b-c1 complex, complex III, CIII), resulting in different assemblies (supercomplex SCI(1)III(2)IV(1) and megacomplex MCI(2)III(2)IV(2)).

It is found in the mitochondrion inner membrane. It carries out the reaction 4 Fe(II)-[cytochrome c] + O2 + 8 H(+)(in) = 4 Fe(III)-[cytochrome c] + 2 H2O + 4 H(+)(out). Component of the cytochrome c oxidase, the last enzyme in the mitochondrial electron transport chain which drives oxidative phosphorylation. The respiratory chain contains 3 multisubunit complexes succinate dehydrogenase (complex II, CII), ubiquinol-cytochrome c oxidoreductase (cytochrome b-c1 complex, complex III, CIII) and cytochrome c oxidase (complex IV, CIV), that cooperate to transfer electrons derived from NADH and succinate to molecular oxygen, creating an electrochemical gradient over the inner membrane that drives transmembrane transport and the ATP synthase. Cytochrome c oxidase is the component of the respiratory chain that catalyzes the reduction of oxygen to water. Electrons originating from reduced cytochrome c in the intermembrane space (IMS) are transferred via the dinuclear copper A center (CU(A)) of subunit 2 and heme A of subunit 1 to the active site in subunit 1, a binuclear center (BNC) formed by heme A3 and copper B (CU(B)). The BNC reduces molecular oxygen to 2 water molecules using 4 electrons from cytochrome c in the IMS and 4 protons from the mitochondrial matrix. The polypeptide is Cytochrome c oxidase subunit 3 (MT-CO3) (Gazella subgutturosa (Goitred gazelle)).